A 460-amino-acid chain; its full sequence is Anthocyanidin 3-O-glucoside 5-O-glucosyltransferase 1 (460 aa).

An N-terminal signal peptide occupies residues 1-22 (MVRRRVLLATFPAQGHINPALQ). H16 (proton acceptor) is an active-site residue. H16 lines the an anthocyanidin pocket. UDP-alpha-D-glucose contacts are provided by Q338, H353, W356, N357, S358, E361, D377, and Q378.

Belongs to the UDP-glycosyltransferase family.

It carries out the reaction an anthocyanidin 3-O-beta-D-glucoside + UDP-alpha-D-glucose = an anthocyanidin 3,5-di-O-beta-D-glucoside + UDP + 2 H(+). Its pathway is pigment biosynthesis; anthocyanin biosynthesis. Its function is as follows. Catalyzes the glucosylation at the O-5 position of anthocyanidin 3-glucosides to form anthocyanidin 3,5-di-O-glucosides using UDP-glucose as sugar donor. Anthocyanidin 3,5-di-O-glucosides are molecules that are responsible for pigmentation. Also acts on anthocyanidin 3-O-(6-O-malonylglucoside). Much less active with hydroxycinnamoylglucose derivatives. No activity in the absence of the 3-O-glucoside group. The sequence is that of Anthocyanidin 3-O-glucoside 5-O-glucosyltransferase 1 (PF3R4) from Perilla frutescens (Beefsteak mint).